The chain runs to 279 residues: Pantothenate synthetase (279 aa).

26–33 (MGGLHEGH) lines the ATP pocket. His33 serves as the catalytic Proton donor. Gln57 contacts (R)-pantoate. Residue Gln57 participates in beta-alanine binding. ATP is bound at residue 143-146 (GKKD). A (R)-pantoate-binding site is contributed by Gln149. Residues Val172 and 180-183 (LSSR) contribute to the ATP site.

This sequence belongs to the pantothenate synthetase family. Homodimer.

It is found in the cytoplasm. The enzyme catalyses (R)-pantoate + beta-alanine + ATP = (R)-pantothenate + AMP + diphosphate + H(+). Its pathway is cofactor biosynthesis; (R)-pantothenate biosynthesis; (R)-pantothenate from (R)-pantoate and beta-alanine: step 1/1. Catalyzes the condensation of pantoate with beta-alanine in an ATP-dependent reaction via a pantoyl-adenylate intermediate. This Nitrosospira multiformis (strain ATCC 25196 / NCIMB 11849 / C 71) protein is Pantothenate synthetase.